The following is a 188-amino-acid chain: MKISANSIRTGNILVYNNDLWVVSKTPEHTQPGKGGAYVQVEMKNLKTGTKRNGRFSSSDYLEKAELEQKDCQFLYFEGNNLVLMDTKHFDQINVPKEILEAKLPFLTENMIVKVEFYNDKPLTIVLPPTVILAISETDPVIKGATVTSSYKPAILENGIKVKVPQYLAIGEKIVVKTDDMTYVERAK.

The protein belongs to the elongation factor P family.

It localises to the cytoplasm. The protein operates within protein biosynthesis; polypeptide chain elongation. In terms of biological role, involved in peptide bond synthesis. Stimulates efficient translation and peptide-bond synthesis on native or reconstituted 70S ribosomes in vitro. Probably functions indirectly by altering the affinity of the ribosome for aminoacyl-tRNA, thus increasing their reactivity as acceptors for peptidyl transferase. The polypeptide is Elongation factor P (Rickettsia typhi (strain ATCC VR-144 / Wilmington)).